Here is a 111-residue protein sequence, read N- to C-terminus: Cytochrome c2 (111 aa).

Cys-14, Cys-17, His-18, and Met-83 together coordinate heme c.

It belongs to the cytochrome c family. In terms of processing, binds 1 heme c group covalently per subunit.

In terms of biological role, cytochrome c2 is found mainly in purple, non-sulfur, photosynthetic bacteria where it functions as the electron donor to the oxidized bacteriochlorophyll in the photophosphorylation pathway. However, it may also have a role in the respiratory chain and is found in some non-photosynthetic bacteria. The chain is Cytochrome c2 from Agrobacterium tumefaciens (strain II Chrys).